A 510-amino-acid polypeptide reads, in one-letter code: Putative glycerol-3-phosphate transporter 3 (510 aa).

12 helical membrane passes run L31–F51, A91–A111, F123–W143, L158–F178, V185–A205, F217–V237, V279–F299, G331–F351, L355–L375, I378–V398, T436–W456, and V459–I479.

Belongs to the major facilitator superfamily. Organophosphate:Pi antiporter (OPA) (TC 2.A.1.4) family.

The protein resides in the membrane. The sequence is that of Putative glycerol-3-phosphate transporter 3 from Arabidopsis thaliana (Mouse-ear cress).